Reading from the N-terminus, the 398-residue chain is Acetate kinase 2 (398 aa).

Mg(2+) is bound at residue asparagine 7. Lysine 14 contributes to the ATP binding site. Arginine 91 is a binding site for substrate. Residue aspartate 148 is the Proton donor/acceptor of the active site. ATP is bound by residues histidine 208 to glycine 212, aspartate 283 to arginine 285, and glycine 331 to asparagine 335. A Mg(2+)-binding site is contributed by glutamate 384.

Belongs to the acetokinase family. As to quaternary structure, homodimer. Mg(2+) is required as a cofactor. Mn(2+) serves as cofactor.

It localises to the cytoplasm. It carries out the reaction acetate + ATP = acetyl phosphate + ADP. The protein operates within metabolic intermediate biosynthesis; acetyl-CoA biosynthesis; acetyl-CoA from acetate: step 1/2. In terms of biological role, catalyzes the formation of acetyl phosphate from acetate and ATP. Can also catalyze the reverse reaction. The chain is Acetate kinase 2 from Clostridium perfringens (strain 13 / Type A).